Consider the following 96-residue polypeptide: Co-chaperonin GroES (96 aa).

This sequence belongs to the GroES chaperonin family. In terms of assembly, heptamer of 7 subunits arranged in a ring. Interacts with the chaperonin GroEL.

It is found in the cytoplasm. Its function is as follows. Together with the chaperonin GroEL, plays an essential role in assisting protein folding. The GroEL-GroES system forms a nano-cage that allows encapsulation of the non-native substrate proteins and provides a physical environment optimized to promote and accelerate protein folding. GroES binds to the apical surface of the GroEL ring, thereby capping the opening of the GroEL channel. This chain is Co-chaperonin GroES, found in Wolbachia pipientis wMel.